Here is a 62-residue protein sequence, read N- to C-terminus: Large ribosomal subunit protein bL32m (62 aa).

The protein belongs to the bacterial ribosomal protein bL32 family.

The protein resides in the mitochondrion. The polypeptide is Large ribosomal subunit protein bL32m (RPL32) (Reclinomonas americana).